Reading from the N-terminus, the 429-residue chain is Adenylosuccinate synthetase (429 aa).

Residues 12-18 (GDEGKGK) and 40-42 (GHT) each bind GTP. The active-site Proton acceptor is the Asp-13. Positions 13 and 40 each coordinate Mg(2+). IMP contacts are provided by residues 13–16 (DEGK), 38–41 (NAGH), Thr-129, Arg-143, Gln-223, Thr-238, and Arg-302. His-41 serves as the catalytic Proton donor. 298–304 (VVTGRKR) is a substrate binding site. Residues Arg-304, 330–332 (KLD), and 412–414 (STS) contribute to the GTP site.

This sequence belongs to the adenylosuccinate synthetase family. Homodimer. Mg(2+) serves as cofactor.

It localises to the cytoplasm. The enzyme catalyses IMP + L-aspartate + GTP = N(6)-(1,2-dicarboxyethyl)-AMP + GDP + phosphate + 2 H(+). It participates in purine metabolism; AMP biosynthesis via de novo pathway; AMP from IMP: step 1/2. Its function is as follows. Plays an important role in the de novo pathway of purine nucleotide biosynthesis. Catalyzes the first committed step in the biosynthesis of AMP from IMP. This is Adenylosuccinate synthetase from Bartonella tribocorum (strain CIP 105476 / IBS 506).